Consider the following 318-residue polypeptide: Acetaldehyde dehydrogenase 1 (318 aa).

15-18 (SGNI) contacts NAD(+). Residue C133 is the Acyl-thioester intermediate of the active site. NAD(+)-binding positions include 164–172 (SAGPGTRAN) and N289.

This sequence belongs to the acetaldehyde dehydrogenase family.

It catalyses the reaction acetaldehyde + NAD(+) + CoA = acetyl-CoA + NADH + H(+). The sequence is that of Acetaldehyde dehydrogenase 1 (xylQ) from Azotobacter vinelandii (strain DJ / ATCC BAA-1303).